The primary structure comprises 163 residues: Fatty acid-binding protein homolog (163 aa).

The first 23 residues, 1-23, serve as a signal peptide directing secretion; it reads MRCLVALILTVLIVTPEVEAKTL.

It belongs to the calycin superfamily. Fatty-acid binding protein (FABP) family. Abundant in the fluid surrounding the developing embryo of Ascaris suum.

May play a role in sequestering potentially toxic fatty acids and their peroxidation products, or it may be involved in the maintenance of the impermeable lipid layer of the eggshell. This Ascaris suum (Pig roundworm) protein is Fatty acid-binding protein homolog.